A 308-amino-acid polypeptide reads, in one-letter code: Ribosomal RNA large subunit methyltransferase F (308 aa).

A disordered region spans residues aspartate 190–aspartate 212.

The protein belongs to the methyltransferase superfamily. METTL16/RlmF family.

Its subcellular location is the cytoplasm. The catalysed reaction is adenosine(1618) in 23S rRNA + S-adenosyl-L-methionine = N(6)-methyladenosine(1618) in 23S rRNA + S-adenosyl-L-homocysteine + H(+). Its function is as follows. Specifically methylates the adenine in position 1618 of 23S rRNA. In Citrobacter koseri (strain ATCC BAA-895 / CDC 4225-83 / SGSC4696), this protein is Ribosomal RNA large subunit methyltransferase F.